Reading from the N-terminus, the 67-residue chain is ATP synthase protein 8 (67 aa).

Residues 8-24 (TWFTTVLSTTITLFILM) form a helical membrane-spanning segment. Lysine 54 is modified (N6-acetyllysine; alternate). An N6-succinyllysine; alternate modification is found at lysine 54. N6-acetyllysine is present on lysine 57.

Belongs to the ATPase protein 8 family. As to quaternary structure, F-type ATPases have 2 components, CF(1) - the catalytic core - and CF(0) - the membrane proton channel. Component of an ATP synthase complex composed of ATP5PB, ATP5MC1, ATP5F1E, ATP5PD, ATP5ME, ATP5PF, ATP5MF, MT-ATP6, MT-ATP8, ATP5F1A, ATP5F1B, ATP5F1D, ATP5F1C, ATP5PO, ATP5MG, ATP5MK and ATP5MJ. Interacts with PRICKLE3.

Its subcellular location is the mitochondrion membrane. Mitochondrial membrane ATP synthase (F(1)F(0) ATP synthase or Complex V) produces ATP from ADP in the presence of a proton gradient across the membrane which is generated by electron transport complexes of the respiratory chain. F-type ATPases consist of two structural domains, F(1) - containing the extramembraneous catalytic core and F(0) - containing the membrane proton channel, linked together by a central stalk and a peripheral stalk. During catalysis, ATP synthesis in the catalytic domain of F(1) is coupled via a rotary mechanism of the central stalk subunits to proton translocation. Part of the complex F(0) domain. Minor subunit located with subunit a in the membrane. The protein is ATP synthase protein 8 (MT-ATP8) of Microtus pennsylvanicus (Meadow vole).